A 371-amino-acid chain; its full sequence is Queuine tRNA-ribosyltransferase (371 aa).

Asp-90 functions as the Proton acceptor in the catalytic mechanism. Residues 90–94 (DSGGF), Asp-144, Gln-189, and Gly-215 each bind substrate. Residues 246–252 (GVGTPEN) are RNA binding. Catalysis depends on Asp-265, which acts as the Nucleophile. Residues 270 to 274 (TRNAR) form an RNA binding; important for wobble base 34 recognition region. Residues Cys-303, Cys-305, Cys-308, and His-334 each contribute to the Zn(2+) site.

Belongs to the queuine tRNA-ribosyltransferase family. Homodimer. Within each dimer, one monomer is responsible for RNA recognition and catalysis, while the other monomer binds to the replacement base PreQ1. Requires Zn(2+) as cofactor.

The catalysed reaction is 7-aminomethyl-7-carbaguanine + guanosine(34) in tRNA = 7-aminomethyl-7-carbaguanosine(34) in tRNA + guanine. The protein operates within tRNA modification; tRNA-queuosine biosynthesis. Catalyzes the base-exchange of a guanine (G) residue with the queuine precursor 7-aminomethyl-7-deazaguanine (PreQ1) at position 34 (anticodon wobble position) in tRNAs with GU(N) anticodons (tRNA-Asp, -Asn, -His and -Tyr). Catalysis occurs through a double-displacement mechanism. The nucleophile active site attacks the C1' of nucleotide 34 to detach the guanine base from the RNA, forming a covalent enzyme-RNA intermediate. The proton acceptor active site deprotonates the incoming PreQ1, allowing a nucleophilic attack on the C1' of the ribose to form the product. After dissociation, two additional enzymatic reactions on the tRNA convert PreQ1 to queuine (Q), resulting in the hypermodified nucleoside queuosine (7-(((4,5-cis-dihydroxy-2-cyclopenten-1-yl)amino)methyl)-7-deazaguanosine). The chain is Queuine tRNA-ribosyltransferase from Helicobacter pylori (strain HPAG1).